The chain runs to 183 residues: Adenine phosphoribosyltransferase (183 aa).

The protein belongs to the purine/pyrimidine phosphoribosyltransferase family. As to quaternary structure, homodimer.

It localises to the cytoplasm. It carries out the reaction AMP + diphosphate = 5-phospho-alpha-D-ribose 1-diphosphate + adenine. It participates in purine metabolism; AMP biosynthesis via salvage pathway; AMP from adenine: step 1/1. In terms of biological role, catalyzes a salvage reaction resulting in the formation of AMP, that is energically less costly than de novo synthesis. The chain is Adenine phosphoribosyltransferase from Salmonella arizonae (strain ATCC BAA-731 / CDC346-86 / RSK2980).